The primary structure comprises 154 residues: Large ribosomal subunit protein uL13 (154 aa).

The segment at 131-154 is disordered; the sequence is DHKHEAQQPEVVDFKSMNSKNTRG.

It belongs to the universal ribosomal protein uL13 family. As to quaternary structure, part of the 50S ribosomal subunit.

Functionally, this protein is one of the early assembly proteins of the 50S ribosomal subunit, although it is not seen to bind rRNA by itself. It is important during the early stages of 50S assembly. The polypeptide is Large ribosomal subunit protein uL13 (Maricaulis maris (strain MCS10) (Caulobacter maris)).